Consider the following 774-residue polypeptide: MEPEREGTERHPRKVRESRQAPNKLVGAAEAMKAGWDLEESQPEAKKARLSTILFTDNCEVTHDQLCELLKYAVLGKSNVPKPSWCQLFHQNHLNNVVVFVLQGMSQLHFYRFYLEFGCLRKAFRHKFRLPPPSSDFLADVVGLQTEQRAGDLPKTMEGPLPSNAKAAINLQDDPIIQKYGSKKVGLTRCLLTKEEMRTFHFPLQGFPDCENFLLTKCNGSIADNSPLFGLDCEMCLTSKGRELTRISLVAEGGCCVMDELVKPENKILDYLTSFSGITKKILNPVTTKLKDVQRQLKALLPPDAVLVGHSLDLDLRALKMIHPYVIDTSLLYVREQGRRFKLKFLAKVILGKDIQCPDRLGHDATEDARTILELARYFLKHGPKKIAELNLEALANHQEIQAAGQEPKNTAEVLQHPNTSVLECLDSVGQKLLFLTRETDAGELPSSRNCQTIKCLSNKEVLEQARVEIPLFPFSIVQFSFKAFSPVLTEEMNKRMRIKWTEISTVYAGPFSKNCNLRALKRLFKSFGPVQSMTFVLETRQPHLCIQYEVLEAAQLAIESLDGILVDGICIKVQRPVTELTLDCDTLVNELEGDSENQGSIYLSGVSETFKEQLLQEPRLFLGLEAVILPKDLKSGKQKKYCFLKFKSFGSAQQALNILTGKDWKLKGRHALTPRHLHAWLRGLPPESTRLPGLRVVPPPFEQEALQTLKLDHPKIAAWRWSRKIGKLYNSLCPGTLCLILLPGTKSTHGSLSGLGLMGIKEEEESAGPGLCS.

Basic and acidic residues predominate over residues 1–19; sequence MEPEREGTERHPRKVRESR. Positions 1-22 are disordered; it reads MEPEREGTERHPRKVRESRQAP. In terms of domain architecture, Exonuclease spans 228–376; sequence LFGLDCEMCL…EDARTILELA (149 aa). 2 consecutive RRM domains span residues 505-579 and 600-679; these read STVY…RPVT and GSIY…RHLH.

The polypeptide is RNA exonuclease 5 (Homo sapiens (Human)).